We begin with the raw amino-acid sequence, 378 residues long: MDIDPKDITISKEFQSIVVPKQLTGPVKAILQEKKLSATETKNVVDDPNGKRIILIPEVTELPKEVLEKVPEAKLEPYPVTLTYKQLTYIELLRHYIPEPLVIPTSFETIGHIAHLNLPDELLPYKKVIGECIILKNPCIKTVAIKQGPINNVYRNMELEVIAGKNDFITEVKQSGFTFKMDFSKVYWNSRLQYEHDSVVATFKENSLVCDAMCGIGPFAVRAAKKGCRVRANDLNPDSYYWLKENCKINGVSENVECFNMDAREFIRKQFDNGGCDYIVMNLPGTAVEFLDAIGEGAKKNRETARMPIVIFHSFDNKDGDYVASLRARAEKALGMKLPEMDIHNVRDVSPGKFMFRCTFSCADLFADEDDDKPHKVE.

S-adenosyl-L-methionine contacts are provided by residues histidine 196, 234 to 235, 262 to 263, and asparagine 282; these read DL and DA.

It belongs to the class I-like SAM-binding methyltransferase superfamily. TRM5/TYW2 family. As to quaternary structure, monomer.

The protein localises to the mitochondrion matrix. Its subcellular location is the nucleus. It is found in the cytoplasm. The enzyme catalyses guanosine(37) in tRNA + S-adenosyl-L-methionine = N(1)-methylguanosine(37) in tRNA + S-adenosyl-L-homocysteine + H(+). Specifically methylates the N1 position of guanosine-37 in various cytoplasmic and mitochondrial tRNAs. Methylation is not dependent on the nature of the nucleoside 5' of the target nucleoside. This is the first step in the biosynthesis of wybutosine (yW), a modified base adjacent to the anticodon of tRNAs and required for accurate decoding. In Trichomonas vaginalis (strain ATCC PRA-98 / G3), this protein is tRNA (guanine(37)-N(1))-methyltransferase.